The primary structure comprises 66 residues: MANKMKTRKSAKKRYSFTVNGKVKYKKQNLRHILTKKSSKRKRNLRKSGNLSCFEVKRIKTLLPYD.

It belongs to the bacterial ribosomal protein bL35 family.

This is Large ribosomal subunit protein bL35 from Borreliella afzelii (strain PKo) (Borrelia afzelii).